A 310-amino-acid polypeptide reads, in one-letter code: MPQVKVTASAPCSSANLGSGFDTLAIALDAFHDRVTISDHDGFKLTGEGIPLDPERNTAGLAAIALLDELGLERDIEIRIEKGVPKGLGLGSSGASAAAAVKALDAYFGLGLTQEEMIGYAMIGEIASSGSPHPDNVSASIIGGLVLVTHDDDLRASRINISGDYRFLVAIPDLFTENKTRAARQMLPRSIPLDSYSKALGRTASLIAGLMSGNRNLIRVGMNDDIVEPSRISLFPYYYDMKRMALANEAVAAAVSGAGPSILMVCDEMSDMDSIRAGISEIFSRYNITGRVIEARMSGGAFVEGSPVSD.

85-95 (PKGLGLGSSGA) contributes to the ATP binding site.

Belongs to the GHMP kinase family. Homoserine kinase subfamily.

It localises to the cytoplasm. It catalyses the reaction L-homoserine + ATP = O-phospho-L-homoserine + ADP + H(+). It functions in the pathway amino-acid biosynthesis; L-threonine biosynthesis; L-threonine from L-aspartate: step 4/5. In terms of biological role, catalyzes the ATP-dependent phosphorylation of L-homoserine to L-homoserine phosphate. In Thermoplasma acidophilum (strain ATCC 25905 / DSM 1728 / JCM 9062 / NBRC 15155 / AMRC-C165), this protein is Homoserine kinase.